The primary structure comprises 287 residues: Polyamine aminopropyltransferase (287 aa).

Positions 5–238 (EIWYETLHAN…GIMTFAWASN (234 aa)) constitute a PABS domain. Gln-33 contributes to the S-methyl-5'-thioadenosine binding site. Residues His-64 and Asp-88 each coordinate spermidine. S-methyl-5'-thioadenosine-binding positions include Glu-108 and 140-141 (DG). Residue Asp-158 is the Proton acceptor of the active site. 158–161 (DCTD) serves as a coordination point for spermidine. S-methyl-5'-thioadenosine is bound at residue Pro-165.

It belongs to the spermidine/spermine synthase family. Homodimer or homotetramer.

It localises to the cytoplasm. It carries out the reaction S-adenosyl 3-(methylsulfanyl)propylamine + putrescine = S-methyl-5'-thioadenosine + spermidine + H(+). Its pathway is amine and polyamine biosynthesis; spermidine biosynthesis; spermidine from putrescine: step 1/1. Its function is as follows. Catalyzes the irreversible transfer of a propylamine group from the amino donor S-adenosylmethioninamine (decarboxy-AdoMet) to putrescine (1,4-diaminobutane) to yield spermidine. This is Polyamine aminopropyltransferase from Pectobacterium atrosepticum (strain SCRI 1043 / ATCC BAA-672) (Erwinia carotovora subsp. atroseptica).